The primary structure comprises 293 residues: MALRRLAALLSLAVLLSAGLAAVSATSQNTGDTVIIWGRNKDEGSLREACDAGRYTTVIISFLSAFGYIPGTYKLDISGHQVSAVGPDIKYCQSKGKLILLAIGGQGGEYSLPSSQAAVDLHDHLWYSYLGGRRNGVYRPFGDANVNGIDFFIDQGAREHYNELAKMLYDHNKDYRATVGVMVTATTRCGYPDHRLDEALATGLFHRIHVKMFSDGRCPAWSRRQSFEKWAKTYPQSRVLIGVVASPDVDKDAYMPPEALNNLLQFINKQPNFGGVMVWDRFYDKKTGFTAHL.

Residues 1–21 form the signal peptide; that stretch reads MALRRLAALLSLAVLLSAGLA. Residues 31-293 form the GH18 domain; that stretch reads GDTVIIWGRN…DKKTGFTAHL (263 aa). Cystine bridges form between Cys-50–Cys-92 and Cys-189–Cys-218.

This sequence belongs to the glycosyl hydrolase 18 family. Xylanase inhibitor subfamily. Expressed in mature grain.

The protein resides in the secreted. Functionally, fungal xylanase inhibitor. Possesses competitive inhibiting activity against several fungal endo-1,4-beta-D-xylanases belonging to glycoside hydrolase family 10 (GH10) and family 11 (GH11). May function in plant defense against secreted fungal pathogen xylanases. Is similar to class III chitinases, but does not exhibit chitinase activity. This Oryza sativa subsp. japonica (Rice) protein is Xylanase inhibitor protein XIP.